Reading from the N-terminus, the 769-residue chain is RNA-directed RNA polymerase (769 aa).

Residues 463 to 579 (PIGIGLDASR…FCEKGDFNRI (117 aa)) enclose the RdRp catalytic domain.

Belongs to the tombusviridae RNA polymerase family.

The catalysed reaction is RNA(n) + a ribonucleoside 5'-triphosphate = RNA(n+1) + diphosphate. Probable polymerase. This is RNA-directed RNA polymerase from Dianthus barbatus (Carnation).